Here is a 458-residue protein sequence, read N- to C-terminus: Monomethylamine methyltransferase MtmB3 (458 aa).

A non-standard amino acid (pyrrolysine) is located at residue Pyl202.

This sequence belongs to the monomethylamine methyltransferase family.

It catalyses the reaction Co(I)-[methylamine-specific corrinoid protein] + methylamine + H(+) = methyl-Co(III)-[methylamine-specific corrinoid protein] + NH4(+). The protein operates within one-carbon metabolism; methanogenesis from methylamine. In terms of biological role, catalyzes the transfer of the methyl group from monomethylamine to the corrinoid cofactor of MtmC. The chain is Monomethylamine methyltransferase MtmB3 (mtmB3) from Methanosarcina barkeri (strain Fusaro / DSM 804).